Here is a 490-residue protein sequence, read N- to C-terminus: Myocilin (490 aa).

Residues 1–18 (MPAVQLLLLACLLGGVGA) form the signal peptide. Residues 51-170 (GQAMLAIQEL…QEVASLRRGQ (120 aa)) adopt a coiled-coil conformation. The segment at 152–186 (LARRLESSSQEVASLRRGQCPQAHSSSQDVPSGSR) is disordered. The segment covering 173 to 182 (QAHSSSQDVP) has biased composition (polar residues). Residues 230–489 (GCGELVWVGE…MVSYDIKLSR (260 aa)) enclose the Olfactomedin-like domain. Cys231 and Cys419 form a disulfide bridge. 5 residues coordinate Ca(2+): Asp366, Asn414, Ala415, Ile463, and Asp464. Positions 488–490 (SRL) match the Microbody targeting signal motif.

In terms of assembly, homodimer (via N-terminus). Can also form higher oligomers. Interacts with OLFM3, FN1, NRCAM, GLDN and NFASC. Interacts (via N-terminus) with MYL2. Interacts with SFRP1, FRZB, FZD7, FZD10, FZD1 and WIF1; regulates Wnt signaling. Interacts with SNTA1; regulates muscle hypertrophy. Interacts with ERBB2 and ERBB3; activates ERBB2-ERBB3 signaling pathway. Interacts with SNCG; affects its secretion and its aggregation. In terms of processing, palmitoylated. Post-translationally, undergoes a calcium-dependent proteolytic cleavage at Gln-212 by CAPN2 in the endoplasmic reticulum. The result is the production of two fragments, one of 35 kDa containing the C-terminal olfactomedin-like domain, and another of 20 kDa containing the N-terminal leucine zipper-like domain. Glycosylated. In terms of tissue distribution, the myocilin 35 kDa fragment is detected in iris and ciliary body.

It localises to the secreted. Its subcellular location is the golgi apparatus. The protein resides in the cytoplasmic vesicle. It is found in the extracellular space. The protein localises to the extracellular matrix. It localises to the extracellular exosome. Its subcellular location is the mitochondrion. The protein resides in the mitochondrion intermembrane space. It is found in the mitochondrion inner membrane. The protein localises to the mitochondrion outer membrane. It localises to the rough endoplasmic reticulum. Its subcellular location is the cell projection. The protein resides in the cilium. It is found in the endoplasmic reticulum. Functionally, secreted glycoprotein regulating the activation of different signaling pathways in adjacent cells to control different processes including cell adhesion, cell-matrix adhesion, cytoskeleton organization and cell migration. Promotes substrate adhesion, spreading and formation of focal contacts. Negatively regulates cell-matrix adhesion and stress fiber assembly through Rho protein signal transduction. Modulates the organization of actin cytoskeleton by stimulating the formation of stress fibers through interactions with components of Wnt signaling pathways. Promotes cell migration through activation of PTK2 and the downstream phosphatidylinositol 3-kinase signaling. Plays a role in bone formation and promotes osteoblast differentiation in a dose-dependent manner through mitogen-activated protein kinase signaling. Mediates myelination in the peripheral nervous system through ERBB2/ERBB3 signaling. Plays a role as a regulator of muscle hypertrophy through the components of dystrophin-associated protein complex. Involved in positive regulation of mitochondrial depolarization. Plays a role in neurite outgrowth. May participate in the obstruction of fluid outflow in the trabecular meshwork. The chain is Myocilin (MYOC) from Bos taurus (Bovine).